Consider the following 35-residue polypeptide: UPF0387 membrane protein YohO (35 aa).

A helical membrane pass occupies residues 6–26 (IGVIALFLLMAIGGIGGVMLA).

The protein belongs to the UPF0387 family.

It localises to the cell inner membrane. In Salmonella paratyphi A (strain ATCC 9150 / SARB42), this protein is UPF0387 membrane protein YohO.